We begin with the raw amino-acid sequence, 71 residues long: Putative membrane protein insertion efficiency factor (71 aa).

Belongs to the UPF0161 family.

The protein localises to the cell membrane. Functionally, could be involved in insertion of integral membrane proteins into the membrane. This chain is Putative membrane protein insertion efficiency factor, found in Ruminiclostridium cellulolyticum (strain ATCC 35319 / DSM 5812 / JCM 6584 / H10) (Clostridium cellulolyticum).